The following is a 207-amino-acid chain: MTHPDQKPWILGLTGGIGSGKSAAAQCFTNLGIDTVDADHASRWVVEPGRPALEQIAAHFGKGLLQASGELDRGALRKLIFENPEQRRWLEALLHPLINQEIVSHLAKAKSPYAILVSPLLIESGQYRMVQRLLVIDTPAHLQIERTMLRDSSSQEQVEAILKVQIQREDRLRHADDVLVNDRDHAWLNSEVERLHHFYLTLRGGQS.

In terms of domain architecture, DPCK spans 10–207; sequence ILGLTGGIGS…FYLTLRGGQS (198 aa). An ATP-binding site is contributed by 18 to 23; the sequence is GSGKSA.

It belongs to the CoaE family.

Its subcellular location is the cytoplasm. The catalysed reaction is 3'-dephospho-CoA + ATP = ADP + CoA + H(+). It participates in cofactor biosynthesis; coenzyme A biosynthesis; CoA from (R)-pantothenate: step 5/5. Catalyzes the phosphorylation of the 3'-hydroxyl group of dephosphocoenzyme A to form coenzyme A. The sequence is that of Dephospho-CoA kinase from Pseudomonas savastanoi pv. phaseolicola (strain 1448A / Race 6) (Pseudomonas syringae pv. phaseolicola (strain 1448A / Race 6)).